The sequence spans 593 residues: Thiol:disulfide interchange protein DsbD (593 aa).

The N-terminal stretch at 1–21 (MRALLTFFVAGLLVLSSPAMA) is a signal peptide. 2 cysteine pairs are disulfide-bonded: Cys130–Cys136 and Cys207–Cys328. Helical transmembrane passes span 193–215 (LLFL…YPIL), 235–257 (LVYV…SAGL), 269–291 (LIGL…TLQL), 318–340 (GAIS…LLYV), 347–369 (LTGG…LVAV), 384–401 (RVKT…IFLL), 408–425 (MWST…FGWL), and 440–462 (SAVG…NYWF). Residues 451 to 593 (FASAQPALNY…FLEHIQRISN (143 aa)) form the Thioredoxin domain. Cys508 and Cys511 are oxidised to a cystine.

Belongs to the thioredoxin family. DsbD subfamily.

The protein localises to the cell inner membrane. The enzyme catalyses [protein]-dithiol + NAD(+) = [protein]-disulfide + NADH + H(+). It carries out the reaction [protein]-dithiol + NADP(+) = [protein]-disulfide + NADPH + H(+). In terms of biological role, required to facilitate the formation of correct disulfide bonds in some periplasmic proteins and for the assembly of the periplasmic c-type cytochromes. Acts by transferring electrons from cytoplasmic thioredoxin to the periplasm. This transfer involves a cascade of disulfide bond formation and reduction steps. The chain is Thiol:disulfide interchange protein DsbD from Vibrio vulnificus (strain CMCP6).